The sequence spans 145 residues: Ribonuclease VapC48 (145 aa).

Positions 6 and 109 each coordinate Mg(2+). A PINc domain is found at 15–141 (HRASPFHDKA…RKFEGIRIRD (127 aa)).

The protein belongs to the PINc/VapC protein family. Mg(2+) is required as a cofactor.

Its function is as follows. Toxic component of a type II toxin-antitoxin (TA) system. An RNase. Its cognate antitoxin is VapB48. The chain is Ribonuclease VapC48 from Mycobacterium tuberculosis (strain CDC 1551 / Oshkosh).